Here is a 307-residue protein sequence, read N- to C-terminus: Porphobilinogen deaminase (307 aa).

The residue at position 239 (Cys239) is an S-(dipyrrolylmethanemethyl)cysteine.

The protein belongs to the HMBS family. As to quaternary structure, monomer. It depends on dipyrromethane as a cofactor.

The enzyme catalyses 4 porphobilinogen + H2O = hydroxymethylbilane + 4 NH4(+). It participates in porphyrin-containing compound metabolism; protoporphyrin-IX biosynthesis; coproporphyrinogen-III from 5-aminolevulinate: step 2/4. Tetrapolymerization of the monopyrrole PBG into the hydroxymethylbilane pre-uroporphyrinogen in several discrete steps. The protein is Porphobilinogen deaminase (hemC) of Campylobacter jejuni subsp. jejuni serotype O:2 (strain ATCC 700819 / NCTC 11168).